The chain runs to 246 residues: Putative carbonic anhydrase 3 (246 aa).

One can recognise an Alpha-carbonic anhydrase domain in the interval 3–244 (GHWSYCDDDE…LNDRKIVHIV (242 aa)). H61 functions as the Proton acceptor in the catalytic mechanism. H91, H93, and H116 together coordinate Zn(2+). 187-188 (TT) is a substrate binding site.

It belongs to the alpha-carbonic anhydrase family. Zn(2+) serves as cofactor.

It carries out the reaction hydrogencarbonate + H(+) = CO2 + H2O. Reversible hydration of carbon dioxide. This chain is Putative carbonic anhydrase 3 (cah-3), found in Caenorhabditis elegans.